Consider the following 472-residue polypeptide: Putative cytochrome P450 135B1 (472 aa).

A heme-binding site is contributed by C388. The segment at 442–472 (RDVSATSQATAQGAGCPAARGGGPSRAVGSQ) is disordered. Residues 452–472 (AQGAGCPAARGGGPSRAVGSQ) show a composition bias toward low complexity.

The protein belongs to the cytochrome P450 family. Requires heme as cofactor.

The sequence is that of Putative cytochrome P450 135B1 (cyp135B1) from Mycobacterium bovis (strain ATCC BAA-935 / AF2122/97).